Consider the following 521-residue polypeptide: MSKANAKYSFVDLFAGIGGFHAALAATGGVCEYAVEIDREAAAVYERNWNKPALGDITDDANDEGVTLRGYDGPIDVLTGGFPCQPFSKSGAQHGMAETRGTLFWNIARIIEEREPTVLILENVRNLVGPRHRHEWLTIIETLRFFGYEVSGAPAIFSPHLLPAWMGGTPQVRERVFITATLVPERMRDERIPRTETGEIDAEAIGPKPVATMNDRFPIKKGGTELFHPGDRKSGWNLLTSGIIREGDPEPSNVDLRLTETETLWIDAWDDLESTIRRATGRPLEGFPYWADSWTDFRELSRLVVIRGFQAPEREVVGDRKRYVARTDMPEGFVPASVTRPAIDETLPAWKQSHLRRNYDFFERHFAEVVAWAYRWGVYTDLFPASRRKLEWQAQDAPRLWDTVMHFRPSGIRAKRPTYLPALVAITQTSIVGPLERRLSPRETARLQGLPEWFDFGEQRAAATYKQMGNGVNVGVVRHILREHVRRDRALLKLTPAGQRIINAVLADEPDATVGALGAAE.

The 484-residue stretch at 8 to 491 (YSFVDLFAGI…REHVRRDRAL (484 aa)) folds into the SAM-dependent MTase C5-type domain. The active site involves C84.

The protein belongs to the class I-like SAM-binding methyltransferase superfamily. C5-methyltransferase family.

It catalyses the reaction a 2'-deoxycytidine in DNA + S-adenosyl-L-methionine = a 5-methyl-2'-deoxycytidine in DNA + S-adenosyl-L-homocysteine + H(+). A methylase, recognizes the double-stranded sequence 5'-AGCT-3', methylates C-3 on both strands, and protects the DNA from cleavage by the AluI endonuclease. The polypeptide is Type II methyltransferase M.AluI (Cellulosimicrobium cellulans (Arthrobacter luteus)).